The chain runs to 258 residues: Acyl-[acyl-carrier-protein]--UDP-N-acetylglucosamine O-acyltransferase (258 aa).

Belongs to the transferase hexapeptide repeat family. LpxA subfamily. In terms of assembly, homotrimer.

The protein resides in the cytoplasm. The enzyme catalyses a (3R)-hydroxyacyl-[ACP] + UDP-N-acetyl-alpha-D-glucosamine = a UDP-3-O-[(3R)-3-hydroxyacyl]-N-acetyl-alpha-D-glucosamine + holo-[ACP]. It participates in glycolipid biosynthesis; lipid IV(A) biosynthesis; lipid IV(A) from (3R)-3-hydroxytetradecanoyl-[acyl-carrier-protein] and UDP-N-acetyl-alpha-D-glucosamine: step 1/6. Functionally, involved in the biosynthesis of lipid A, a phosphorylated glycolipid that anchors the lipopolysaccharide to the outer membrane of the cell. The polypeptide is Acyl-[acyl-carrier-protein]--UDP-N-acetylglucosamine O-acyltransferase (Ectopseudomonas mendocina (strain ymp) (Pseudomonas mendocina)).